The following is a 220-amino-acid chain: Deoxyribose-phosphate aldolase (220 aa).

The active-site Proton donor/acceptor is the aspartate 89. The active-site Schiff-base intermediate with acetaldehyde is the lysine 151. Lysine 180 functions as the Proton donor/acceptor in the catalytic mechanism.

The protein belongs to the DeoC/FbaB aldolase family. DeoC type 1 subfamily.

The protein localises to the cytoplasm. It carries out the reaction 2-deoxy-D-ribose 5-phosphate = D-glyceraldehyde 3-phosphate + acetaldehyde. Its pathway is carbohydrate degradation; 2-deoxy-D-ribose 1-phosphate degradation; D-glyceraldehyde 3-phosphate and acetaldehyde from 2-deoxy-alpha-D-ribose 1-phosphate: step 2/2. Catalyzes a reversible aldol reaction between acetaldehyde and D-glyceraldehyde 3-phosphate to generate 2-deoxy-D-ribose 5-phosphate. This Macrococcus caseolyticus (strain JCSC5402) (Macrococcoides caseolyticum) protein is Deoxyribose-phosphate aldolase.